A 64-amino-acid chain; its full sequence is Large ribosomal subunit protein bL28 (64 aa).

The protein belongs to the bacterial ribosomal protein bL28 family.

The chain is Large ribosomal subunit protein bL28 from Persephonella marina (strain DSM 14350 / EX-H1).